A 265-amino-acid polypeptide reads, in one-letter code: Probable enoyl-CoA hydratase 1, peroxisomal (265 aa).

Methionine 1 is subject to N-acetylmethionine. Substrate-binding positions include 68-72 (SGVDL) and alanine 112. Residues 263 to 265 (SKL) carry the Microbody targeting signal motif.

The protein belongs to the enoyl-CoA hydratase/isomerase family.

Its subcellular location is the peroxisome. It carries out the reaction a (3S)-3-hydroxyacyl-CoA = a (2E)-enoyl-CoA + H2O. It catalyses the reaction a 4-saturated-(3S)-3-hydroxyacyl-CoA = a (3E)-enoyl-CoA + H2O. It participates in lipid metabolism; fatty acid beta-oxidation. Functionally, straight-chain enoyl-CoA thioesters from C4 up to at least C16 are processed, although with decreasing catalytic rate. The polypeptide is Probable enoyl-CoA hydratase 1, peroxisomal (Arabidopsis thaliana (Mouse-ear cress)).